The chain runs to 58 residues: UPF0434 protein NT01EI_2448 (58 aa).

It belongs to the UPF0434 family.

The sequence is that of UPF0434 protein NT01EI_2448 from Edwardsiella ictaluri (strain 93-146).